The following is a 253-amino-acid chain: E3 ubiquitin-protein ligase MARCHF3 (253 aa).

Residues 63-123 form an RING-CH-type zinc finger; it reads SPFNDRPMCR…ELCHFRFAVE (61 aa). Positions 71, 74, 87, 89, 97, 100, 113, and 116 each coordinate Zn(2+). 2 consecutive transmembrane segments (helical) span residues 145 to 165 and 182 to 202; these read LFGDMVCFLFITPLATISGWL and AVGLIALTVALFTIYLFWTLV. Phosphoserine is present on residues serine 237 and serine 243.

As to quaternary structure, interacts with MARCHF2 and STX6.

Its subcellular location is the cytoplasmic vesicle membrane. The protein localises to the early endosome membrane. It catalyses the reaction S-ubiquitinyl-[E2 ubiquitin-conjugating enzyme]-L-cysteine + [acceptor protein]-L-lysine = [E2 ubiquitin-conjugating enzyme]-L-cysteine + N(6)-ubiquitinyl-[acceptor protein]-L-lysine.. It participates in protein modification; protein ubiquitination. In terms of biological role, E3 ubiquitin-protein ligase which may be involved in endosomal trafficking. E3 ubiquitin ligases accept ubiquitin from an E2 ubiquitin-conjugating enzyme in the form of a thioester and then directly transfer the ubiquitin to targeted substrates. The polypeptide is E3 ubiquitin-protein ligase MARCHF3 (Homo sapiens (Human)).